Reading from the N-terminus, the 260-residue chain is Cytochrome c oxidase subunit 3 (260 aa).

Residues 1–15 (MTHQTHAYHMVNPSP) are Mitochondrial matrix-facing. The chain crosses the membrane as a helical span at residues 16-34 (WPLTGALSALLMTSGLAMW). Over 35–40 (FHFNST) the chain is Mitochondrial intermembrane. Residues 41–66 (ALLMIGLTTNMLTMYQWWRDIIREST) form a helical membrane-spanning segment. Topologically, residues 67–72 (FQGHHT) are mitochondrial matrix. Residues 73–105 (PAVQKGLRYGMILFIISEVLFFTGFFWAFYHSS) form a helical membrane-spanning segment. The Mitochondrial intermembrane segment spans residues 106-128 (LAPTPELGGCWPPTGIHPLNPLE). Residues 129 to 152 (VPLLNTSVLLASGVSITWAHHSLM) traverse the membrane as a helical segment. Residues 153 to 155 (EGD) lie on the Mitochondrial matrix side of the membrane. A helical membrane pass occupies residues 156 to 183 (RNHMLQALFITITLGVYFTLLQASEYYE). Topologically, residues 184–190 (APFTISD) are mitochondrial intermembrane. Residues 191 to 223 (GVYGSTFFVATGFHGLHVIIGSTFLIVCFFRQL) form a helical membrane-spanning segment. The Mitochondrial matrix portion of the chain corresponds to 224 to 232 (KFHFTSNHH). The chain crosses the membrane as a helical span at residues 233-256 (FGFEAAAWYWHFVDVVWLFLYVSI). Over 257 to 260 (YWWG) the chain is Mitochondrial intermembrane.

The protein belongs to the cytochrome c oxidase subunit 3 family. Component of the cytochrome c oxidase (complex IV, CIV), a multisubunit enzyme composed of 14 subunits. The complex is composed of a catalytic core of 3 subunits MT-CO1, MT-CO2 and MT-CO3, encoded in the mitochondrial DNA, and 11 supernumerary subunits COX4I, COX5A, COX5B, COX6A, COX6B, COX6C, COX7A, COX7B, COX7C, COX8 and NDUFA4, which are encoded in the nuclear genome. The complex exists as a monomer or a dimer and forms supercomplexes (SCs) in the inner mitochondrial membrane with NADH-ubiquinone oxidoreductase (complex I, CI) and ubiquinol-cytochrome c oxidoreductase (cytochrome b-c1 complex, complex III, CIII), resulting in different assemblies (supercomplex SCI(1)III(2)IV(1) and megacomplex MCI(2)III(2)IV(2)).

It localises to the mitochondrion inner membrane. It carries out the reaction 4 Fe(II)-[cytochrome c] + O2 + 8 H(+)(in) = 4 Fe(III)-[cytochrome c] + 2 H2O + 4 H(+)(out). In terms of biological role, component of the cytochrome c oxidase, the last enzyme in the mitochondrial electron transport chain which drives oxidative phosphorylation. The respiratory chain contains 3 multisubunit complexes succinate dehydrogenase (complex II, CII), ubiquinol-cytochrome c oxidoreductase (cytochrome b-c1 complex, complex III, CIII) and cytochrome c oxidase (complex IV, CIV), that cooperate to transfer electrons derived from NADH and succinate to molecular oxygen, creating an electrochemical gradient over the inner membrane that drives transmembrane transport and the ATP synthase. Cytochrome c oxidase is the component of the respiratory chain that catalyzes the reduction of oxygen to water. Electrons originating from reduced cytochrome c in the intermembrane space (IMS) are transferred via the dinuclear copper A center (CU(A)) of subunit 2 and heme A of subunit 1 to the active site in subunit 1, a binuclear center (BNC) formed by heme A3 and copper B (CU(B)). The BNC reduces molecular oxygen to 2 water molecules using 4 electrons from cytochrome c in the IMS and 4 protons from the mitochondrial matrix. This Bos mutus grunniens (Wild yak) protein is Cytochrome c oxidase subunit 3 (MT-CO3).